A 100-amino-acid chain; its full sequence is Defensin-6 (100 aa).

Residues 1–19 (MRTLTILTAVLLVALQAKA) form the signal peptide. The propeptide occupies 20 to 68 (EPLQAEDEPLQAKAYEADAQEQRGANDQDFAVSFAEDASSSLRALGSTR). 3 cysteine pairs are disulfide-bonded: C72-C99, C74-C88, and C78-C98.

Belongs to the alpha-defensin family. In terms of assembly, homodimer. Self-assembles into higher-order oligomers termed nanonets, fibril-like structures that entrap microbes. Self-assembly into nanonets seems to protect against proteolytic digestion in duodenal fluid. Interacts with Y.enterocolitica invasin and S.typhimurium fliC/flagellim; the interaction creates an anchoring site for progressive DEFA6 self-assembly into nanonets. Post-translationally, proteolytically cleaved by trypsin at Arg-68; the propeptide is stored in the tissue of the small intestine and the mature peptide is found in the luminal fluid; cleavage may occur during or after release into the lumen. The N-terminal propeptide region suppresses self-assembly and renders DEFA6 propeptide unable to agglutinate bacteria and protect human epithelial cells from bacterial invasion. Under reducing conditions, naturally present in the gut owing to the low redox potential or enzymatically generated by the thioredoxin system, the disulfide bridges are opened leading to a conformational change of DEF6, thereby changing its antimicrobial spectrum. The reduced form exhibits inhibitory activity against anaerobic bacteria, in contrast to the minimal antimicrobial activity of the disulfide-linked oxidized form. The formation of higher-order nanonets and bacterial entrapment is independent of the redox state.

The protein localises to the secreted. Its subcellular location is the cytoplasmic vesicle. The protein resides in the secretory vesicle. Host-defense peptide that contributes to intestinal innate immunity and mediates homeostasis at mucosal surfaces by forming higher-order oligomers that capture bacteria and prevent microbial invasion of the epithelium. After binding to bacterial surface proteins, undergoes ordered self-assembly to form fibril-like nanonets that surround and entangle bacteria and thereby prevent bacterial invasion across the epithelial barrier. Entangles and agglutinates Gram-negative bacteria, such as E.coli, S.typhimurium and Y.enterocolitica, and Gram-positive bacteria such as L.monocytogenes, thereby protecting the intestine against invasion by enteric bacterial pathogens. Blocks adhesion of C.albicans to intestinal epithelial cells and thereby suppresses fungal invasion of epithelial cells and biofilm formation. Under reducing conditions and in an acidic environment similar to the intestinal milieu, exhibits inhibitory activity against anaerobic bacteria such as B.adolescentis, L.acidophilus, and B.breve, as well as B.longum and S.thermophilus, possibly by leading to alterations in bacterial cell envelope structures. The disulfide-linked oxidized form exhibits negligible antimicrobial activity against Gram-negative and Gram-positive bacteria, as compared to the enteric defensin DEFA5. This Pan troglodytes (Chimpanzee) protein is Defensin-6 (DEFA6).